A 121-amino-acid polypeptide reads, in one-letter code: Large ribosomal subunit protein bL20 (121 aa).

This sequence belongs to the bacterial ribosomal protein bL20 family.

Its function is as follows. Binds directly to 23S ribosomal RNA and is necessary for the in vitro assembly process of the 50S ribosomal subunit. It is not involved in the protein synthesizing functions of that subunit. The protein is Large ribosomal subunit protein bL20 (rplT) of Chlamydia pneumoniae (Chlamydophila pneumoniae).